A 310-amino-acid polypeptide reads, in one-letter code: Upstream stimulatory factor 1 (310 aa).

Positions 1–17 are enriched in polar residues; that stretch reads MKGQQKTAETEEGTVQI. 2 disordered regions span residues 1–26 and 171–209; these read MKGQ…ATGE and QGGS…EVER. Residues 194 to 209 are compositionally biased toward basic and acidic residues; that stretch reads TTRDEKRRAQHNEVER. The 56-residue stretch at 199 to 254 folds into the bHLH domain; sequence KRRAQHNEVERRRRDKINNWIVQLSKIIPDCSMESTKSGQSKGGILSKACDYIQEL. The segment at 271-292 is leucine-zipper; it reads LQLDNDVLRQQVEDLKNKNLLL. Residue Lys-306 forms a Glycyl lysine isopeptide (Lys-Gly) (interchain with G-Cter in SUMO2) linkage.

Efficient DNA binding requires dimerization with another bHLH protein. Binds DNA as a homodimer or a heterodimer (USF1/USF2).

The protein localises to the nucleus. Functionally, transcription factor that binds to a symmetrical DNA sequence (E-boxes) (5'-CACGTG-3') that is found in a variety of viral and cellular promoters. Regulates the expression of the surfactant protein-A (SP-A) gene. The sequence is that of Upstream stimulatory factor 1 (USF1) from Oryctolagus cuniculus (Rabbit).